A 66-amino-acid polypeptide reads, in one-letter code: Beta-toxin Css6 (66 aa).

Residues 1–66 (KEGYLVNSYT…VWPLPNKTCN (66 aa)) enclose the LCN-type CS-alpha/beta domain. 4 disulfides stabilise this stretch: Cys12–Cys65, Cys16–Cys41, Cys25–Cys46, and Cys29–Cys48. Asn66 bears the Asparagine amide mark.

Belongs to the long (4 C-C) scorpion toxin superfamily. Sodium channel inhibitor family. Beta subfamily. As to expression, expressed by the venom gland.

It localises to the secreted. In terms of biological role, beta toxins bind voltage-independently at site-4 of sodium channels (Nav) and shift the voltage of activation toward more negative potentials thereby affecting sodium channel activation and promoting spontaneous and repetitive firing. The sequence is that of Beta-toxin Css6 from Centruroides suffusus (Durango bark scorpion).